The following is a 578-amino-acid chain: Protein RIK (578 aa).

Positions methionine 1 to lysine 34 are disordered. Residues serine 206–alanine 273 enclose the KH domain. Over residues alanine 413–asparagine 425 the composition is skewed to polar residues. The interval alanine 413–serine 578 is disordered. Residues proline 472 to serine 492 show a composition bias toward pro residues. Composition is skewed to low complexity over residues lysine 493 to methionine 503 and serine 510 to methionine 521. Residues tyrosine 560–glutamate 572 show a composition bias toward acidic residues.

As to quaternary structure, interacts with AS1. In terms of tissue distribution, expressed in vegetative tissues.

It is found in the nucleus. In Arabidopsis thaliana (Mouse-ear cress), this protein is Protein RIK (RIK).